A 118-amino-acid chain; its full sequence is ATP synthase subunit g, mitochondrial (118 aa).

F-type ATP synthases have 2 components, the catalytic core F(1) and the membrane-embedded component F(0), linked together by a central stalk and a peripheral stalk. The central stalk, also called rotor shaft, is often seen as part of F(1). The peripheral stalk is seen as part of F(0). F(0) contains the membrane channel next to the rotor. F-type ATP synthases form dimers but each monomer functions independently in ATP generation. The dimer consists of 18 different polypeptides: ATP1 (subunit alpha, part of F(1), 3 molecules per monomer), ATP2 (subunit beta, part of F(1), 3 molecules per monomer), ATP3 (subunit gamma, part of the central stalk), ATP4 (subunit b, part of the peripheral stalk), ATP5/OSCP (subunit 5/OSCP, part of the peripheral stalk), ATP6 (subunit a, part of the peripheral stalk), ATP7 (subunit d, part of the peripheral stalk), ATP8 (subunit 8, part of the peripheral stalk), OLI1 (subunit c, part of the rotor, 10 molecules per monomer), ATP14 (subunit h, part of the peripheral stalk), ATP15 (subunit epsilon, part of the central stalk), ATP16 (subunit delta, part of the central stalk), ATP17 (subunit f, part of the peripheral stalk), ATP18 (subunit i/j, part of the peripheral stalk). Dimer-specific subunits are ATP19 (subunit k, at interface between monomers), ATP20 (subunit g, at interface between monomers), TIM11 (subunit e, at interface between monomers). Also contains subunit L.

It is found in the mitochondrion inner membrane. Functionally, mitochondrial membrane ATP synthase (F(1)F(0) ATP synthase or Complex V) produces ATP from ADP in the presence of a proton gradient across the membrane which is generated by electron transport complexes of the respiratory chain. F-type ATP synthases consist of two structural domains, F(1) - containing the extramembraneous catalytic core, and F(0) - containing the membrane proton channel, linked together by a central stalk and a peripheral stalk. During catalysis, ATP synthesis in the catalytic domain of F(1) is coupled via a rotary mechanism of the central stalk subunits to proton translocation. Part of the complex F(0) domain Minor subunit located with subunit a/ATP6 in the membrane. Together with subunit e/TIM11, probably contributes to membrane curvature at the site of the ATP synthase dimer, ultimately contributing to formation of cristae. In Pichia angusta (Yeast), this protein is ATP synthase subunit g, mitochondrial.